Reading from the N-terminus, the 1072-residue chain is DNA-directed RNA polymerase subunit beta (1072 aa).

This sequence belongs to the RNA polymerase beta chain family. In terms of assembly, in plastids the minimal PEP RNA polymerase catalytic core is composed of four subunits: alpha, beta, beta', and beta''. When a (nuclear-encoded) sigma factor is associated with the core the holoenzyme is formed, which can initiate transcription.

It localises to the plastid. Its subcellular location is the chloroplast. It carries out the reaction RNA(n) + a ribonucleoside 5'-triphosphate = RNA(n+1) + diphosphate. DNA-dependent RNA polymerase catalyzes the transcription of DNA into RNA using the four ribonucleoside triphosphates as substrates. The polypeptide is DNA-directed RNA polymerase subunit beta (Cycas taitungensis (Prince sago)).